A 240-amino-acid chain; its full sequence is Ribonuclease HII (240 aa).

An RNase H type-2 domain is found at 21–210 (GLVAGVDEAG…VAAAVQRTVV (190 aa)). Residues aspartate 27, glutamate 28, and aspartate 119 each coordinate a divalent metal cation.

Belongs to the RNase HII family. It depends on Mn(2+) as a cofactor. Requires Mg(2+) as cofactor.

Its subcellular location is the cytoplasm. The enzyme catalyses Endonucleolytic cleavage to 5'-phosphomonoester.. Its function is as follows. Endonuclease that specifically degrades the RNA of RNA-DNA hybrids. The polypeptide is Ribonuclease HII (Paracidovorax citrulli (strain AAC00-1) (Acidovorax citrulli)).